We begin with the raw amino-acid sequence, 428 residues long: Adenylosuccinate synthetase (428 aa).

Residues 11 to 17 and 39 to 41 contribute to the GTP site; these read GDEGKGK and GHT. Aspartate 12 functions as the Proton acceptor in the catalytic mechanism. Residues aspartate 12 and glycine 39 each coordinate Mg(2+). IMP-binding positions include 12-15, 37-40, threonine 130, arginine 144, asparagine 226, threonine 241, and arginine 305; these read DEGK and NAGH. The active-site Proton donor is the histidine 40. 301–307 provides a ligand contact to substrate; it reads VTTGRKR. Residues arginine 307, 333–335, and 415–417 each bind GTP; these read KLD and GTG.

The protein belongs to the adenylosuccinate synthetase family. As to quaternary structure, homodimer. The cofactor is Mg(2+).

Its subcellular location is the cytoplasm. It carries out the reaction IMP + L-aspartate + GTP = N(6)-(1,2-dicarboxyethyl)-AMP + GDP + phosphate + 2 H(+). Its pathway is purine metabolism; AMP biosynthesis via de novo pathway; AMP from IMP: step 1/2. Plays an important role in the de novo pathway and in the salvage pathway of purine nucleotide biosynthesis. Catalyzes the first committed step in the biosynthesis of AMP from IMP. The protein is Adenylosuccinate synthetase of Lodderomyces elongisporus (strain ATCC 11503 / CBS 2605 / JCM 1781 / NBRC 1676 / NRRL YB-4239) (Yeast).